Consider the following 209-residue polypeptide: Large ribosomal subunit protein uL3 (209 aa).

The disordered stretch occupies residues S127–A151.

It belongs to the universal ribosomal protein uL3 family. Part of the 50S ribosomal subunit. Forms a cluster with proteins L14 and L19.

Functionally, one of the primary rRNA binding proteins, it binds directly near the 3'-end of the 23S rRNA, where it nucleates assembly of the 50S subunit. This chain is Large ribosomal subunit protein uL3, found in Borrelia duttonii (strain Ly).